We begin with the raw amino-acid sequence, 148 residues long: MAEIKSKVTLIGAMLARPGLEFIYEGELPACEQCKVRKACNNLKVGRKYRVLSIRATVHGCSVHLNGACAVEIVESPMVGLIKADLAIANSRILPDLSCTQSECKSYPLCHPDGVVSGERYMVSEVLGNAPDHCDKGRSLKLVELLPI.

It belongs to the UPF0179 family.

This is UPF0179 protein Mpal_0949 from Methanosphaerula palustris (strain ATCC BAA-1556 / DSM 19958 / E1-9c).